A 251-amino-acid chain; its full sequence is Zinc import ATP-binding protein ZnuC (251 aa).

In terms of domain architecture, ABC transporter spans 5–220 (VSLENVSVSF…PEFISMFGPR (216 aa)). 37-44 (GPNGAGKS) is a binding site for ATP.

The protein belongs to the ABC transporter superfamily. Zinc importer (TC 3.A.1.15.5) family. In terms of assembly, the complex is composed of two ATP-binding proteins (ZnuC), two transmembrane proteins (ZnuB) and a solute-binding protein (ZnuA).

The protein resides in the cell inner membrane. The enzyme catalyses Zn(2+)(out) + ATP(in) + H2O(in) = Zn(2+)(in) + ADP(in) + phosphate(in) + H(+)(in). Its function is as follows. Part of the ABC transporter complex ZnuABC involved in zinc import. Responsible for energy coupling to the transport system. Seems to be important for the virulence. This Salmonella typhimurium (strain LT2 / SGSC1412 / ATCC 700720) protein is Zinc import ATP-binding protein ZnuC.